The chain runs to 363 residues: Pyrimidine monooxygenase RutA (363 aa).

FMN-binding positions include 49–50 (IK), Asn-115, Glu-124, 140–141 (RY), and Ser-190.

This sequence belongs to the NtaA/SnaA/DszA monooxygenase family. RutA subfamily.

The enzyme catalyses uracil + FMNH2 + NADH + O2 = (Z)-3-ureidoacrylate + FMN + NAD(+) + H2O + H(+). It catalyses the reaction thymine + FMNH2 + NADH + O2 = (Z)-2-methylureidoacrylate + FMN + NAD(+) + H2O + H(+). In terms of biological role, catalyzes the pyrimidine ring opening between N-3 and C-4 by an unusual flavin hydroperoxide-catalyzed mechanism, adding oxygen atoms in the process to yield ureidoacrylate peracid, that immediately reacts with FMN forming ureidoacrylate and FMN-N(5)-oxide. The FMN-N(5)-oxide reacts spontaneously with NADH to produce FMN. Requires the flavin reductase RutF to regenerate FMN in vivo. The sequence is that of Pyrimidine monooxygenase RutA from Klebsiella pneumoniae subsp. pneumoniae (strain ATCC 700721 / MGH 78578).